Here is a 290-residue protein sequence, read N- to C-terminus: Shikimate dehydrogenase (NADP(+)) (290 aa).

Shikimate-binding positions include 21 to 23 and T68; that span reads SLS. K72 serves as the catalytic Proton acceptor. E84 lines the NADP(+) pocket. Positions 93 and 108 each coordinate shikimate. NADP(+)-binding positions include 132–136 and L230; that span reads GYGGA. Y232 provides a ligand contact to shikimate. G253 lines the NADP(+) pocket.

Belongs to the shikimate dehydrogenase family. Homodimer.

The enzyme catalyses shikimate + NADP(+) = 3-dehydroshikimate + NADPH + H(+). It functions in the pathway metabolic intermediate biosynthesis; chorismate biosynthesis; chorismate from D-erythrose 4-phosphate and phosphoenolpyruvate: step 4/7. Its function is as follows. Involved in the biosynthesis of the chorismate, which leads to the biosynthesis of aromatic amino acids. Catalyzes the reversible NADPH linked reduction of 3-dehydroshikimate (DHSA) to yield shikimate (SA). This is Shikimate dehydrogenase (NADP(+)) from Synechocystis sp. (strain ATCC 27184 / PCC 6803 / Kazusa).